Reading from the N-terminus, the 392-residue chain is Leucine-rich repeat-containing protein 74B (392 aa).

Positions 24–46 (RLSGVPEAEQGPEANWDSDLETE) are disordered. 9 LRR repeats span residues 106–129 (NPYV…ALAG), 134–157 (SSSI…ALCA), 162–185 (NQAM…HLAE), 192–213 (DLKS…TLGP), 220–241 (GLTE…AFAR), 248–269 (FLKV…AVGE), 276–297 (VLEE…SLGL), 304–325 (TLRI…GLLK), and 334–356 (ALEL…ASSV).

In Homo sapiens (Human), this protein is Leucine-rich repeat-containing protein 74B.